Here is an 879-residue protein sequence, read N- to C-terminus: Protein P (879 aa).

A terminal protein domain (TP) region spans residues 1-184 (MHPFSRLFRN…GKPYSWEHRQ (184 aa)). The spacer stretch occupies residues 185–382 (LVQHNGQQHK…YCIHHIVSSI (198 aa)). The interval 304-345 (SASNSNKSRSREKAYSSNSTSKRYSPPLNYEKSDFSSPGVRG) is disordered. The interval 383–724 (DDWGPCTVTG…YEELWPVVRQ (342 aa)) is polymerase/reverse transcriptase domain (RT). In terms of domain architecture, Reverse transcriptase spans 393–634 (DVTIKSPRTP…NHLHFMGYVI (242 aa)). 3 residues coordinate Mg(2+): aspartate 465, aspartate 585, and aspartate 586.

It belongs to the hepadnaviridae P protein family.

It catalyses the reaction DNA(n) + a 2'-deoxyribonucleoside 5'-triphosphate = DNA(n+1) + diphosphate. It carries out the reaction Endonucleolytic cleavage to 5'-phosphomonoester.. Its activity is regulated as follows. Activated by host HSP70 and HSP40 in vitro to be able to bind the epsilon loop of the pgRNA. Because deletion of the RNase H region renders the protein partly chaperone-independent, the chaperones may be needed indirectly to relieve occlusion of the RNA-binding site by this domain. Inhibited by several reverse-transcriptase inhibitors: Lamivudine, Adefovir and Entecavir. Functionally, multifunctional enzyme that converts the viral RNA genome into dsDNA in viral cytoplasmic capsids. This enzyme displays a DNA polymerase activity that can copy either DNA or RNA templates, and a ribonuclease H (RNase H) activity that cleaves the RNA strand of RNA-DNA heteroduplexes in a partially processive 3'- to 5'-endonucleasic mode. Neo-synthesized pregenomic RNA (pgRNA) are encapsidated together with the P protein, and reverse-transcribed inside the nucleocapsid. Initiation of reverse-transcription occurs first by binding the epsilon loop on the pgRNA genome, and is initiated by protein priming, thereby the 5'-end of (-)DNA is covalently linked to P protein. Partial (+)DNA is synthesized from the (-)DNA template and generates the relaxed circular DNA (RC-DNA) genome. After budding and infection, the RC-DNA migrates in the nucleus, and is converted into a plasmid-like covalently closed circular DNA (cccDNA). The activity of P protein does not seem to be necessary for cccDNA generation, and is presumably released from (+)DNA by host nuclear DNA repair machinery. This is Protein P from Woodchuck hepatitis B virus (isolate 1) (WHV).